We begin with the raw amino-acid sequence, 195 residues long: Endoribonuclease YbeY (195 aa).

3 residues coordinate Zn(2+): histidine 152, histidine 156, and histidine 162.

This sequence belongs to the endoribonuclease YbeY family. It depends on Zn(2+) as a cofactor.

The protein resides in the cytoplasm. In terms of biological role, single strand-specific metallo-endoribonuclease involved in late-stage 70S ribosome quality control and in maturation of the 3' terminus of the 16S rRNA. The protein is Endoribonuclease YbeY of Rhodopseudomonas palustris (strain HaA2).